Reading from the N-terminus, the 441-residue chain is Maltose-6'-phosphate glucosidase MalH (441 aa).

Position 4–70 (4–70 (FSVVIAGGGS…PEIEFLATTN (67 aa))) interacts with NAD(+). 2 residues coordinate substrate: Arg93 and Asn147. Cys169 provides a ligand contact to Mn(2+). The active-site Proton donor is the Asp170. His200 provides a ligand contact to Mn(2+). Tyr264 serves as the catalytic Proton acceptor. Arg284 is a substrate binding site.

In terms of assembly, homotetramer. NAD(+) serves as cofactor. Mn(2+) is required as a cofactor.

The enzyme catalyses alpha-maltose 6'-phosphate + H2O = D-glucose 6-phosphate + D-glucose. Catalyzes the hydrolysis of O-alpha-linked disaccharide 6-phosphates, including maltose-6'P and all five phosphorylated isomers of sucrose, but not sucrose-6P. Does not hydrolyze beta-linked disaccharide 6-phosphates such as cellobiose-6'P and gentiobiose-6'P. Is involved in the dissimilation of maltose and related O-alpha-linked glucosides produced via the phosphoenolpyruvate-dependent sugar phosphotransferase system (PEP-PTS). In Clostridium acetobutylicum (strain ATCC 824 / DSM 792 / JCM 1419 / IAM 19013 / LMG 5710 / NBRC 13948 / NRRL B-527 / VKM B-1787 / 2291 / W), this protein is Maltose-6'-phosphate glucosidase MalH (malH).